Here is a 294-residue protein sequence, read N- to C-terminus: 4-hydroxybenzoate octaprenyltransferase (294 aa).

The next 7 membrane-spanning stretches (helical) occupy residues 37–57 (LWAM…WIFF), 101–121 (LAVA…LNAL), 142–162 (FFAI…PMAF), 169–189 (VPFV…AYDT), 219–239 (IMIC…LLGL), 241–261 (WPYY…YTLI), and 271–293 (AAFR…AYLL).

It belongs to the UbiA prenyltransferase family. The cofactor is Mg(2+).

It is found in the cell inner membrane. The catalysed reaction is all-trans-octaprenyl diphosphate + 4-hydroxybenzoate = 4-hydroxy-3-(all-trans-octaprenyl)benzoate + diphosphate. It participates in cofactor biosynthesis; ubiquinone biosynthesis. Its function is as follows. Catalyzes the prenylation of para-hydroxybenzoate (PHB) with an all-trans polyprenyl group. Mediates the second step in the final reaction sequence of ubiquinone-8 (UQ-8) biosynthesis, which is the condensation of the polyisoprenoid side chain with PHB, generating the first membrane-bound Q intermediate 3-octaprenyl-4-hydroxybenzoate. In Cupriavidus metallidurans (strain ATCC 43123 / DSM 2839 / NBRC 102507 / CH34) (Ralstonia metallidurans), this protein is 4-hydroxybenzoate octaprenyltransferase.